The chain runs to 723 residues: Host cell factor 2 (723 aa).

Kelch repeat units follow at residues 34 to 79 (LMII…GFVC), 83 to 130 (RILV…RLGH), 207 to 255 (KMYV…VIGN), and 257 to 305 (MYIF…DSQE). 3 consecutive Fibronectin type-III domains span residues 357-436 (PPAP…ANCT), 516-606 (TPSN…TCIP), and 608-720 (FPGA…SKKA). The disordered stretch occupies residues 398-472 (AASPDASAAP…VALHSPLAPN (75 aa)). A compositionally biased stretch (polar residues) spans 419-433 (QGSNSILHNSVSDPA).

Binds KMT2A/MLL1. Component of the MLL1/MLL complex, at least composed of KMT2A/MLL1, ASH2L, RBBP5, DPY30, WDR5, MEN1, HCFC1 and HCFC2. Interacts with TASOR.

The protein resides in the cytoplasm. It localises to the nucleus. The protein is Host cell factor 2 (Hcfc2) of Rattus norvegicus (Rat).